The primary structure comprises 64 residues: Large ribosomal subunit protein uL29 (64 aa).

The protein belongs to the universal ribosomal protein uL29 family.

In Paraburkholderia phytofirmans (strain DSM 17436 / LMG 22146 / PsJN) (Burkholderia phytofirmans), this protein is Large ribosomal subunit protein uL29.